Reading from the N-terminus, the 280-residue chain is Putative S-adenosyl-L-methionine-dependent methyltransferase FRAAL3836 (280 aa).

S-adenosyl-L-methionine-binding positions include Asp-121 and 150 to 151; that span reads DL.

It belongs to the UPF0677 family.

Exhibits S-adenosyl-L-methionine-dependent methyltransferase activity. The protein is Putative S-adenosyl-L-methionine-dependent methyltransferase FRAAL3836 of Frankia alni (strain DSM 45986 / CECT 9034 / ACN14a).